The chain runs to 259 residues: MEIRNRLAQLREKEEMALIAFIMAAVPDEDLCLDCIRALEQGGCDLLELGVPFTDPLADGEVIERFHHWGVRLGLNLKRGLDFAARVRAACQLPLILFSYYNPILQMGLDRFAGDCRSAGVDAVIVPDLPLDELGRLAGQGLELIPMLAPSSTLSRIQMAADLDPAFIYCVSVRGVTGVRSLPEMEIKDYLQKVRRVSTAPLALGFGISQPEQVRAFRGQADGVVIGSALAQIIEEYESRPALLPGMLEKRCQALKLLS.

Active-site proton acceptor residues include E48 and D59.

This sequence belongs to the TrpA family. As to quaternary structure, tetramer of two alpha and two beta chains.

The enzyme catalyses (1S,2R)-1-C-(indol-3-yl)glycerol 3-phosphate + L-serine = D-glyceraldehyde 3-phosphate + L-tryptophan + H2O. It participates in amino-acid biosynthesis; L-tryptophan biosynthesis; L-tryptophan from chorismate: step 5/5. Its function is as follows. The alpha subunit is responsible for the aldol cleavage of indoleglycerol phosphate to indole and glyceraldehyde 3-phosphate. This is Tryptophan synthase alpha chain from Syntrophomonas wolfei subsp. wolfei (strain DSM 2245B / Goettingen).